The primary structure comprises 503 residues: Variant surface glycoprotein ILTAT 1.3 (503 aa).

The N-terminal stretch at 1-29 is a signal peptide; that stretch reads MTKAYENRMLLQALVLAAVLCTTHAEGTA. Disulfide bonds link cysteine 42–cysteine 168 and cysteine 150–cysteine 206. N-linked (GlcNAc...) asparagine glycosylation is found at asparagine 419 and asparagine 432. Aspartate 480 is lipidated: GPI-anchor amidated aspartate. Positions 481–503 are cleaved as a propeptide — removed in mature form; that stretch reads SSFILNKQFALSVVSAAFAALLF.

Its subcellular location is the cell membrane. Functionally, VSG forms a coat on the surface of the parasite. The trypanosome evades the immune response of the host by expressing a series of antigenically distinct VSGs from an estimated 1000 VSG genes. The sequence is that of Variant surface glycoprotein ILTAT 1.3 from Trypanosoma brucei brucei.